A 342-amino-acid chain; its full sequence is DNA primase (342 aa).

Zn(2+)-binding residues include Cys37, Cys40, Cys65, and Cys68.

Belongs to the Tequatrovirus DNA primase family. In terms of assembly, monomer. Hexamer. Interacts with the DnaB-like replicative helicase; this interaction forms the active primosome complex, which is composed of 6 helicase and 1 primase subunits and expresses full helicase and primase activities. Interacts (via C-terminus) with the single-stranded DNA-binding protein. Part of the replicase complex that includes the DNA polymerase, the polymerase clamp, the clamp loader complex, the single-stranded DNA binding protein, the primase, the DnaB-like replicative helicase and the helicase assembly factor.

Its function is as follows. Synthesizes short RNA primers for the lagging strand DNA replication. The primase synthesizes short RNA primers on the lagging strand that the polymerase elongates using dNTPs. Recognizes two trinucleotide sequences 5'-GTT-3' and 5'-GCT-3' in vitro, but uses only the first as the priming site in vivo. This chain is DNA primase (61), found in Escherichia coli (Bacteriophage T4).